A 343-amino-acid chain; its full sequence is N-acetyl-gamma-glutamyl-phosphate reductase (343 aa).

Residue cysteine 147 is part of the active site.

Belongs to the NAGSA dehydrogenase family. Type 1 subfamily.

Its subcellular location is the cytoplasm. It carries out the reaction N-acetyl-L-glutamate 5-semialdehyde + phosphate + NADP(+) = N-acetyl-L-glutamyl 5-phosphate + NADPH + H(+). The protein operates within amino-acid biosynthesis; L-arginine biosynthesis; N(2)-acetyl-L-ornithine from L-glutamate: step 3/4. Catalyzes the NADPH-dependent reduction of N-acetyl-5-glutamyl phosphate to yield N-acetyl-L-glutamate 5-semialdehyde. The sequence is that of N-acetyl-gamma-glutamyl-phosphate reductase from Listeria monocytogenes serotype 4b (strain F2365).